The primary structure comprises 143 residues: General odorant-binding protein 28a (143 aa).

A signal peptide spans 1 to 21; sequence MQSTPIILVAIVLLGAALVRA. Intrachain disulfides connect Cys38–Cys69, Cys65–Cys123, and Cys113–Cys132.

Expressed in antenna, mostly on the medial and posterior surface of the third antennal segment.

It is found in the secreted. The chain is General odorant-binding protein 28a (Obp28a) from Drosophila melanogaster (Fruit fly).